The chain runs to 222 residues: Probable transaldolase 2 (222 aa).

K90 serves as the catalytic Schiff-base intermediate with substrate.

This sequence belongs to the transaldolase family. Type 3B subfamily.

It is found in the cytoplasm. The catalysed reaction is D-sedoheptulose 7-phosphate + D-glyceraldehyde 3-phosphate = D-erythrose 4-phosphate + beta-D-fructose 6-phosphate. It functions in the pathway carbohydrate degradation; pentose phosphate pathway; D-glyceraldehyde 3-phosphate and beta-D-fructose 6-phosphate from D-ribose 5-phosphate and D-xylulose 5-phosphate (non-oxidative stage): step 2/3. Its function is as follows. Transaldolase is important for the balance of metabolites in the pentose-phosphate pathway. The protein is Probable transaldolase 2 of Bacillus cereus (strain ATCC 14579 / DSM 31 / CCUG 7414 / JCM 2152 / NBRC 15305 / NCIMB 9373 / NCTC 2599 / NRRL B-3711).